Here is a 637-residue protein sequence, read N- to C-terminus: Threonine--tRNA ligase (637 aa).

The 61-residue stretch at 1–61 folds into the TGS domain; the sequence is MPNVKLPDGN…KEDCSLIIVT (61 aa). A catalytic region spans residues 242-533; sequence DHRKLGKALD…LIEHYAGKLP (292 aa). Residues C333, H384, and H510 each contribute to the Zn(2+) site.

Belongs to the class-II aminoacyl-tRNA synthetase family. As to quaternary structure, homodimer. Requires Zn(2+) as cofactor.

The protein localises to the cytoplasm. It catalyses the reaction tRNA(Thr) + L-threonine + ATP = L-threonyl-tRNA(Thr) + AMP + diphosphate + H(+). Catalyzes the attachment of threonine to tRNA(Thr) in a two-step reaction: L-threonine is first activated by ATP to form Thr-AMP and then transferred to the acceptor end of tRNA(Thr). Also edits incorrectly charged L-seryl-tRNA(Thr). This chain is Threonine--tRNA ligase, found in Legionella pneumophila (strain Corby).